Consider the following 947-residue polypeptide: Bifunctional glutamine synthetase adenylyltransferase/adenylyl-removing enzyme (947 aa).

The adenylyl removase stretch occupies residues 1–440; sequence MTPLSSPLSQ…VFNELIGDDE (440 aa). The segment at 450–947 is adenylyl transferase; the sequence is SEPWREVWQD…ASWRKWLVAV (498 aa).

The protein belongs to the GlnE family. The cofactor is Mg(2+).

The catalysed reaction is [glutamine synthetase]-O(4)-(5'-adenylyl)-L-tyrosine + phosphate = [glutamine synthetase]-L-tyrosine + ADP. It catalyses the reaction [glutamine synthetase]-L-tyrosine + ATP = [glutamine synthetase]-O(4)-(5'-adenylyl)-L-tyrosine + diphosphate. Involved in the regulation of glutamine synthetase GlnA, a key enzyme in the process to assimilate ammonia. When cellular nitrogen levels are high, the C-terminal adenylyl transferase (AT) inactivates GlnA by covalent transfer of an adenylyl group from ATP to specific tyrosine residue of GlnA, thus reducing its activity. Conversely, when nitrogen levels are low, the N-terminal adenylyl removase (AR) activates GlnA by removing the adenylyl group by phosphorolysis, increasing its activity. The regulatory region of GlnE binds the signal transduction protein PII (GlnB) which indicates the nitrogen status of the cell. The polypeptide is Bifunctional glutamine synthetase adenylyltransferase/adenylyl-removing enzyme (Salmonella paratyphi C (strain RKS4594)).